Here is a 216-residue protein sequence, read N- to C-terminus: Probable chemoreceptor glutamine deamidase CheD (216 aa).

It belongs to the CheD family.

It catalyses the reaction L-glutaminyl-[protein] + H2O = L-glutamyl-[protein] + NH4(+). In terms of biological role, probably deamidates glutamine residues to glutamate on methyl-accepting chemotaxis receptors (MCPs), playing an important role in chemotaxis. In Halorhodospira halophila (strain DSM 244 / SL1) (Ectothiorhodospira halophila (strain DSM 244 / SL1)), this protein is Probable chemoreceptor glutamine deamidase CheD.